The following is a 236-amino-acid chain: MPAYKRVLLKLSGEALMGDDAFGINRSTIEAMVNDIAEIVKLGVQVAVVIGGGNIFRGVAGGAAGMDRATADYMGMLATMMNALALQDAMRHANIEGRVQSALRMDQVVEPYIRPRAIRQLEEGKVVIFAAGTGNPFFTTDTAAALRGSEIGAEVVLKATKVDGVYTADPKKDPSATRYTTISFDEAISRNLQVMDATAFALCRDQKLPIRVFSIVKPGALKRIILGEDEGTLVHV.

10 to 13 (KLSG) is an ATP binding site. G52 is a binding site for UMP. Residues G53 and R57 each contribute to the ATP site. UMP-binding positions include D72 and 133–140 (TGNPFFTT). Residues T160, Y166, and D169 each contribute to the ATP site.

This sequence belongs to the UMP kinase family. As to quaternary structure, homohexamer.

Its subcellular location is the cytoplasm. The enzyme catalyses UMP + ATP = UDP + ADP. The protein operates within pyrimidine metabolism; CTP biosynthesis via de novo pathway; UDP from UMP (UMPK route): step 1/1. Inhibited by UTP. Its function is as follows. Catalyzes the reversible phosphorylation of UMP to UDP. The chain is Uridylate kinase from Cupriavidus necator (strain ATCC 17699 / DSM 428 / KCTC 22496 / NCIMB 10442 / H16 / Stanier 337) (Ralstonia eutropha).